We begin with the raw amino-acid sequence, 192 residues long: Signal peptidase complex catalytic subunit SEC11C (192 aa).

Topologically, residues 1-28 are cytoplasmic; sequence MVRAGAVGAHLPASGLDIFGDLKKMNKR. Residues 29–48 form a helical; Signal-anchor for type II membrane protein membrane-spanning segment; the sequence is QLYYQVLNFAMIVSSALMIW. Over 49–192 the chain is Lumenal; the sequence is KGLIVLTGSE…GAYVLLKRES (144 aa). Residues serine 68, histidine 108, and aspartate 134 each act as charge relay system in the active site. The tract at residues 177-188 is C-terminal short (CTS) helix; it reads ALLAVMGAYVLL.

This sequence belongs to the peptidase S26B family. In terms of assembly, component of the signal peptidase complex paralog C (SPC-C) composed of a catalytic subunit SEC11C and three accessory subunits SPCS1, SPCS2 and SPCS3. Within the complex, interacts with SPCS2 and SPCS3. The complex induces a local thinning of the ER membrane which is used to measure the length of the signal peptide (SP) h-region of protein substrates. This ensures the selectivity of the complex towards h-regions shorter than 18-20 amino acids. In terms of processing, may undergo processing at the N-terminus.

It is found in the endoplasmic reticulum membrane. The enzyme catalyses Cleavage of hydrophobic, N-terminal signal or leader sequences from secreted and periplasmic proteins.. Functionally, catalytic component of the signal peptidase complex (SPC) which catalyzes the cleavage of N-terminal signal sequences from nascent proteins as they are translocated into the lumen of the endoplasmic reticulum. Specifically cleaves N-terminal signal peptides that contain a hydrophobic alpha-helix (h-region) shorter than 18-20 amino acids. This is Signal peptidase complex catalytic subunit SEC11C (SEC11C) from Homo sapiens (Human).